Consider the following 665-residue polypeptide: Anaphase-promoting complex subunit 3 (665 aa).

The stretch at 115-148 (SCMLDVLGTMYKKAGFLKKATDCFVEAVSINPYN) is one TPR 1 repeat. The DNA-binding element occupies 191 to 257 (VPEPSFLKKS…HQSLKLQSQS (67 aa)). TPR repeat units lie at residues 329 to 362 (LLKL…QQNT), 363 to 396 (PFVL…SPSR), 431 to 464 (PESW…DPTF), 466 to 498 (YAYT…NVRH), 499 to 532 (YNAW…NPNN), 534 to 566 (VLIT…DEKS), 568 to 600 (LARF…APDE), and 601 to 634 (ANVH…DGKA).

The protein belongs to the APC3/CDC27 family. In terms of assembly, the APC/C is composed of at least 13 subunits: apc1, apc2, nuc2, apc4, apc5, cut9, apc8, apc10, apc11, hcn1, apc13, apc14 and apc15. Interacts with apc10 and cut9.

Its subcellular location is the nucleus. Its function is as follows. Component of the anaphase-promoting complex/cyclosome (APC/C), a cell cycle-regulated E3 ubiquitin-protein ligase complex that controls progression through mitosis and the G1 phase of the cell cycle. The APC/C is thought to confer substrate specificity and, in the presence of ubiquitin-conjugating E2 enzymes, it catalyzes the formation of protein-ubiquitin conjugates that are subsequently degraded by the 26S proteasome. Interacts with spindle apparatus, chromosomes, or nuclear envelope, and interconnect nuclear and cytoskeletal functions in mitosis, so the elongation of the spindle in anaphase is blocked. The protein is Anaphase-promoting complex subunit 3 (nuc2) of Schizosaccharomyces pombe (strain 972 / ATCC 24843) (Fission yeast).